The chain runs to 838 residues: Valine--tRNA ligase (838 aa).

The short motif at proline 46 to histidine 56 is the 'HIGH' region element. The 'KMSKS' region motif lies at lysine 514–serine 518. Lysine 517 serves as a coordination point for ATP. The stretch at valine 768 to glutamate 838 forms a coiled coil.

Belongs to the class-I aminoacyl-tRNA synthetase family. ValS type 1 subfamily. In terms of assembly, monomer.

The protein resides in the cytoplasm. The catalysed reaction is tRNA(Val) + L-valine + ATP = L-valyl-tRNA(Val) + AMP + diphosphate. In terms of biological role, catalyzes the attachment of valine to tRNA(Val). As ValRS can inadvertently accommodate and process structurally similar amino acids such as threonine, to avoid such errors, it has a 'posttransfer' editing activity that hydrolyzes mischarged Thr-tRNA(Val) in a tRNA-dependent manner. In Mycoplasma pneumoniae (strain ATCC 29342 / M129 / Subtype 1) (Mycoplasmoides pneumoniae), this protein is Valine--tRNA ligase.